The following is a 467-amino-acid chain: MVEDPIPLPNASMEVSYQNPIEAATIPVQIAVAEPVATPNPPPCLHENKFLVSVEVCLKPSSTARLEDVQRAVERMLENRSMSYADGLVLIPADDLFLVDNVQRICICDTEEWVKNNDVLLFWQVKPVVHTFQLIEEGPCEDLCADGQPASFNEWILPAKEFDGLWESLIYESGLKQRLLRYAASALLFTQKGVNPNLVSWNRIILLHGPPGTGKTSLCKALAQKLSIRCNSRYPHCQLIEVNAHSLFSKWFSESGKLVAKLFQKIQEMVEEDGNLVFVLIDEVESLAAARKAALSGSEPSDSIRVVNALLTQMDKLKSAPNVIILTTSNITTAIDVAFVDRADIKAYVGPPTLHVRYEILRSCVEELISKGIISSFQGCDGLSIPSFSSLKEKLSESEVHDTNTVPWFCKQLIEAAKGCEGLSGRSLRKLPFLAHAALADPYSHDPSNFLCTMIETAKREKSEQPE.

An ATP-binding site is contributed by 209–216 (GPPGTGKT).

It belongs to the AAA ATPase family. PCH2 subfamily.

The protein localises to the chromosome. In terms of biological role, plays a key role in chromosome recombination during meiosis. Mediates meiotic chromosome remodeling and crossover maturation. The polypeptide is Pachytene checkpoint protein 2 homolog (Arabidopsis thaliana (Mouse-ear cress)).